Here is a 180-residue protein sequence, read N- to C-terminus: Large ribosomal subunit protein uL6 (180 aa).

This sequence belongs to the universal ribosomal protein uL6 family. As to quaternary structure, part of the 50S ribosomal subunit.

This protein binds to the 23S rRNA, and is important in its secondary structure. It is located near the subunit interface in the base of the L7/L12 stalk, and near the tRNA binding site of the peptidyltransferase center. In Dictyoglomus turgidum (strain DSM 6724 / Z-1310), this protein is Large ribosomal subunit protein uL6.